Here is a 356-residue protein sequence, read N- to C-terminus: Histidinol-phosphate aminotransferase (356 aa).

Residue Lys214 is modified to N6-(pyridoxal phosphate)lysine.

It belongs to the class-II pyridoxal-phosphate-dependent aminotransferase family. Histidinol-phosphate aminotransferase subfamily. Homodimer. The cofactor is pyridoxal 5'-phosphate.

It catalyses the reaction L-histidinol phosphate + 2-oxoglutarate = 3-(imidazol-4-yl)-2-oxopropyl phosphate + L-glutamate. The protein operates within amino-acid biosynthesis; L-histidine biosynthesis; L-histidine from 5-phospho-alpha-D-ribose 1-diphosphate: step 7/9. This is Histidinol-phosphate aminotransferase from Escherichia coli O17:K52:H18 (strain UMN026 / ExPEC).